The following is a 177-amino-acid chain: Bifunctional protein PyrR (177 aa).

Positions 99–111 (VVLVDDVIYKGRT) match the PRPP-binding motif.

This sequence belongs to the purine/pyrimidine phosphoribosyltransferase family. PyrR subfamily.

The catalysed reaction is UMP + diphosphate = 5-phospho-alpha-D-ribose 1-diphosphate + uracil. Functionally, regulates the transcription of the pyrimidine nucleotide (pyr) operon in response to exogenous pyrimidines. In terms of biological role, also displays a weak uracil phosphoribosyltransferase activity which is not physiologically significant. The chain is Bifunctional protein PyrR from Gloeothece citriformis (strain PCC 7424) (Cyanothece sp. (strain PCC 7424)).